The chain runs to 498 residues: Polyamine aminopropyltransferase (498 aa).

6 helical membrane-spanning segments follow: residues 7–27 (ISVL…GTIA), 35–55 (VTQF…GSWL), 67–87 (FLEI…ILYL), 97–117 (IPLF…IPVL), 134–154 (VLSL…IFFA), and 163–183 (GFIF…VLPL). Positions 196–446 (VVVLTLLILG…AGQRPIQFKK (251 aa)) are spermidine synthase. A PABS domain is found at 200-439 (TLLILGFSYS…GEWGFVLAGQ (240 aa)). Position 234 (Gln-234) interacts with S-methyl-5'-thioadenosine. Residues His-264 and Asp-288 each contribute to the spermidine site. Residues Asp-308 and 342–343 (DA) each bind S-methyl-5'-thioadenosine. Residue Asp-360 is the Proton acceptor of the active site.

This sequence belongs to the spermidine/spermine synthase family. As to quaternary structure, homodimer or homotetramer.

The protein resides in the cell membrane. The enzyme catalyses S-adenosyl 3-(methylsulfanyl)propylamine + putrescine = S-methyl-5'-thioadenosine + spermidine + H(+). Its pathway is amine and polyamine biosynthesis; spermidine biosynthesis; spermidine from putrescine: step 1/1. In terms of biological role, catalyzes the irreversible transfer of a propylamine group from the amino donor S-adenosylmethioninamine (decarboxy-AdoMet) to putrescine (1,4-diaminobutane) to yield spermidine. This Leptospira interrogans serogroup Icterohaemorrhagiae serovar copenhageni (strain Fiocruz L1-130) protein is Polyamine aminopropyltransferase.